Reading from the N-terminus, the 369-residue chain is MSVSGLKAELKFLASIFDKNHERFRIVSWKLDELHCQFLVPPPAPPLLTLHCNITESYPSSSPIWFVDSDDPNLTSVLERLEDSKNNNSLRQQLKWLICELCRLYNLPKHLDVEMLDQPLPTGQNGTTEEVTSEEEEEEEMAEDIEDLDHYEMKEEEPINGRKSEDEGIEKENLAILEKIRKSQRQDHLNGAVSGSVQASDRLMKELRDIYRSQSYKTGIYSVELINDSLYDWHVKLQKVDPDSPLHSDLQILKEKEGIEYILLNFSFKDNFPFDPPFVRVVLPVLSGGYVLGGGALCMELLTKQGWSSAYSIESVIMQINATLVKGKARVQFGANKNQYNLARAQQSYNSIVQIHEKNGWYTPPKEDG.

A disordered region spans residues 117-143 (DQPLPTGQNGTTEEVTSEEEEEEEMAE). Over residues 131–143 (VTSEEEEEEEMAE) the composition is skewed to acidic residues. The 165-residue stretch at 198–362 (QASDRLMKEL…VQIHEKNGWY (165 aa)) folds into the UBC core domain. The Glycyl thioester intermediate role is filled by C298.

The protein belongs to the ubiquitin-conjugating enzyme family. In terms of processing, auto-ubiquitinated in vitro. In terms of tissue distribution, detected at embryo implantation sites in the luminal epithelium of pregnant endometrium. Detected at low levels in ovary and liver.

It localises to the cytoplasm. The enzyme catalyses S-ubiquitinyl-[E1 ubiquitin-activating enzyme]-L-cysteine + [E2 ubiquitin-conjugating enzyme]-L-cysteine = [E1 ubiquitin-activating enzyme]-L-cysteine + S-ubiquitinyl-[E2 ubiquitin-conjugating enzyme]-L-cysteine.. The protein operates within protein modification; protein ubiquitination. Functionally, accepts ubiquitin from the E1 complex and catalyzes its covalent attachment to other proteins. In vitro catalyzes 'Lys-48'-linked polyubiquitination. In Oryctolagus cuniculus (Rabbit), this protein is Ubiquitin-conjugating enzyme E2 Q2 (UBE2Q2).